We begin with the raw amino-acid sequence, 574 residues long: Egalitarian protein homolog (574 aa).

The segment at 259–278 (LNEDGSENGSDEGEETNNNG) is disordered. Over residues 262-273 (DGSENGSDEGEE) the composition is skewed to acidic residues. The 3'-5' exonuclease domain occupies 312–414 (NMEKKVVGLD…SLLQHEKFNK (103 aa)).

As to quaternary structure, component of a dynein-regulating complex composed of at least bicd-1, dlc-1 and egal-1.

Its subcellular location is the nucleus envelope. Functionally, part of a complex with bicd-1 and dlc-1, which is recruited to the nuclear envelope by unc-83, where in turn, it recruits dynein to the nuclear surface and regulates nuclear migration in hypodermal precursor cells. This chain is Egalitarian protein homolog, found in Caenorhabditis elegans.